Here is a 309-residue protein sequence, read N- to C-terminus: Tagatose-6-phosphate kinase 1 (309 aa).

This sequence belongs to the carbohydrate kinase PfkB family. LacC subfamily.

It carries out the reaction D-tagatofuranose 6-phosphate + ATP = D-tagatofuranose 1,6-bisphosphate + ADP + H(+). It participates in carbohydrate metabolism; D-tagatose 6-phosphate degradation; D-glyceraldehyde 3-phosphate and glycerone phosphate from D-tagatose 6-phosphate: step 1/2. This chain is Tagatose-6-phosphate kinase 1, found in Streptococcus agalactiae serotype III (strain NEM316).